A 361-amino-acid chain; its full sequence is MAQCGGGDVSRHRKGHLDTVESLCQGLLDDVMLDDDKCRAMFGYLQEWQDLASMCYGSLGGEPPLAPEASNGSGSTGGGGSFRKRRPDDAKGESNSICKRQRGKQQQQQQPCHPDQMAAAVGKGRPERARPGAKKKAEVASPKDSPATSASTVTAGQKTDYIHVRARRGQATDSHSLAERVRRERISERMRYLQELVPGCNKVTGKAGMLDEIINYVQSLQKQVEFLSMKIAASNPVVNFNIVEDLFGRQLSQAACNPAALPAMALPMAQVEPSCLQMSPLQQMQTSAGSSGYGLEMVVSNQYSPPGGPMSVPAGASVEPCLNVNGAAGWDIGSHGLFSGFDAPFQSVQSDCLLDNLKMEM.

Residues 66 to 159 (APEASNGSGS…ASTVTAGQKT (94 aa)) form a disordered region. Positions 124–138 (GRPERARPGAKKKAE) are enriched in basic and acidic residues. Polar residues predominate over residues 146-157 (PATSASTVTAGQ). Positions 166 to 173 (ARRGQATD) match the Nuclear localization signal motif. The basic motif; degenerate stretch occupies residues 170 to 183 (QATDSHSLAERVRR). The region spanning 170 to 220 (QATDSHSLAERVRRERISERMRYLQELVPGCNKVTGKAGMLDEIINYVQSL) is the bHLH domain. The helix-loop-helix motif stretch occupies residues 184–220 (ERISERMRYLQELVPGCNKVTGKAGMLDEIINYVQSL).

The protein belongs to the bHLH protein family. In terms of assembly, homodimer. Interacts with IBH1.

It localises to the nucleus. In terms of biological role, together with BCL1, positive regulator of cell elongation at least partially through increased gibberellic acid (GA) biosynthesis. The sequence is that of Basic helix-loop-helix protein 79 from Oryza sativa subsp. indica (Rice).